A 132-amino-acid chain; its full sequence is MKRNRWIYAVFTILIIGLGLGSRAFSSVLPDTLNTYLGDSLWAAMIFTGCGFLFRKLKTMITGIISLSFCFVIEFSQLYHAEWIDQIRDTSLGGLVLGYGFLWSDIEAYTIGIAACAAIELLVLGIKKRRCM.

4 consecutive transmembrane segments (helical) span residues 6-26 (WIYA…RAFS), 34-54 (NTYL…GFLF), 59-79 (TMIT…SQLY), and 106-126 (IEAY…VLGI).

The protein resides in the cell membrane. This is an uncharacterized protein from Bacillus subtilis (strain 168).